The chain runs to 366 residues: MSGNTLGQNFRVTTFGESHGIALGAIIDGCPPGMELSEEDIQIELDRRKPGTSKHATARREDDKVQILSGVFEGKTTGTPIGLLIHNTDQRSKDYSKVAETFRPAHADYTYTQKYGIRDYRGGGRSSARETAMRVAAGAVAKKYLKERLGIEIKGYLSQLGPITVDNVSWPFDNDNEYFCPDKDKQEEIRQYMDNLLKQKDSVGAKISIIAKNVPVGLGEPVFDRLDADLAHALMSINAVKGVEIGDGFAVAAQRGTEHRDEMTPEGFVSNHAGGILGGISTGQDIVAHIALKPTSSIMTPGRSINTEGEAIEMVTKGRHDPCVGIRATPIAEAKVALVLMDHFMRNRAQNGDVVPPVMDLAHPEN.

Arg-48 lines the NADP(+) pocket. FMN-binding positions include 125–127 (RSS), 238–239 (NA), Gly-278, 293–297 (KPTSS), and Arg-319.

The protein belongs to the chorismate synthase family. In terms of assembly, homotetramer. It depends on FMNH2 as a cofactor.

The enzyme catalyses 5-O-(1-carboxyvinyl)-3-phosphoshikimate = chorismate + phosphate. Its pathway is metabolic intermediate biosynthesis; chorismate biosynthesis; chorismate from D-erythrose 4-phosphate and phosphoenolpyruvate: step 7/7. In terms of biological role, catalyzes the anti-1,4-elimination of the C-3 phosphate and the C-6 proR hydrogen from 5-enolpyruvylshikimate-3-phosphate (EPSP) to yield chorismate, which is the branch point compound that serves as the starting substrate for the three terminal pathways of aromatic amino acid biosynthesis. This reaction introduces a second double bond into the aromatic ring system. This is Chorismate synthase from Hydrogenovibrio crunogenus (strain DSM 25203 / XCL-2) (Thiomicrospira crunogena).